Consider the following 198-residue polypeptide: Carnitine operon protein CaiE (198 aa).

The interval 179 to 198 (VEENRPRLKGTTDVKPKSAQ) is disordered. Positions 180-198 (EENRPRLKGTTDVKPKSAQ) are enriched in basic and acidic residues.

Belongs to the transferase hexapeptide repeat family.

It functions in the pathway amine and polyamine metabolism; carnitine metabolism. In terms of biological role, overproduction of CaiE stimulates the activity of CaiB and CaiD. The chain is Carnitine operon protein CaiE from Salmonella enteritidis PT4 (strain P125109).